A 223-amino-acid chain; its full sequence is Ribose-5-phosphate isomerase A (223 aa).

Substrate contacts are provided by residues 32–35 (TGST), 83–86 (DGAD), and 96–99 (KGGG). The active-site Proton acceptor is Glu-105. Lys-123 contributes to the substrate binding site.

Belongs to the ribose 5-phosphate isomerase family. As to quaternary structure, homodimer.

The enzyme catalyses aldehydo-D-ribose 5-phosphate = D-ribulose 5-phosphate. Its pathway is carbohydrate degradation; pentose phosphate pathway; D-ribose 5-phosphate from D-ribulose 5-phosphate (non-oxidative stage): step 1/1. Catalyzes the reversible conversion of ribose-5-phosphate to ribulose 5-phosphate. This Acinetobacter baumannii (strain SDF) protein is Ribose-5-phosphate isomerase A.